Here is a 188-residue protein sequence, read N- to C-terminus: Pyridoxal 5'-phosphate synthase subunit PdxT (188 aa).

46 to 48 (GES) contacts L-glutamine. Catalysis depends on C78, which acts as the Nucleophile. L-glutamine is bound by residues R105 and 134-135 (IR). Residues H170 and E172 each act as charge relay system in the active site.

This sequence belongs to the glutaminase PdxT/SNO family. In terms of assembly, in the presence of PdxS, forms a dodecamer of heterodimers. Only shows activity in the heterodimer.

It catalyses the reaction aldehydo-D-ribose 5-phosphate + D-glyceraldehyde 3-phosphate + L-glutamine = pyridoxal 5'-phosphate + L-glutamate + phosphate + 3 H2O + H(+). It carries out the reaction L-glutamine + H2O = L-glutamate + NH4(+). Its pathway is cofactor biosynthesis; pyridoxal 5'-phosphate biosynthesis. In terms of biological role, catalyzes the hydrolysis of glutamine to glutamate and ammonia as part of the biosynthesis of pyridoxal 5'-phosphate. The resulting ammonia molecule is channeled to the active site of PdxS. The polypeptide is Pyridoxal 5'-phosphate synthase subunit PdxT (Thermotoga maritima (strain ATCC 43589 / DSM 3109 / JCM 10099 / NBRC 100826 / MSB8)).